The following is a 329-amino-acid chain: Transmembrane protein I329L (329 aa).

Positions 1–31 (MLRVFIFFVFLGSGLTGRIKPQVTCKYFISE) are cleaved as a signal peptide. N-linked (GlcNAc...) asparagine; by host glycans are attached at residues N32, N39, N44, N76, N82, and N101. The Extracellular segment spans residues 32 to 239 (NNTWYKYNVT…NTERYKSCYP (208 aa)). Residues 112 to 133 (ELKFLDLRYNDLQVIDYNILRK) form an LRR repeat. N-linked (GlcNAc...) asparagine; by host glycans are attached at residues N185 and N219. The cysteines at positions 195 and 237 are disulfide-linked. The chain crosses the membrane as a helical span at residues 240 to 260 (LVFISILCSCISFLFLFICLL). Topologically, residues 261-329 (RSICKKYSCT…EKKVSCSRRK (69 aa)) are cytoplasmic.

This sequence belongs to the asfivirus I329L family. In terms of processing, highly glycosylated.

It is found in the host endoplasmic reticulum membrane. The protein resides in the host Golgi apparatus membrane. In terms of biological role, viral TLR3 homolog that probably prevents TLR3 dimerization and subsequent induction of IFN. Inhibits dsRNA-stimulated activation of NF-kB and IRF3. The chain is Transmembrane protein I329L from Ornithodoros (relapsing fever ticks).